The sequence spans 342 residues: Dihydroorotase (342 aa).

Zn(2+)-binding residues include H13 and H15. Substrate-binding positions include H15–R17 and N41. Zn(2+) contacts are provided by K99, H136, and H174. K99 is subject to N6-carboxylysine. H136 is a binding site for substrate. L218 serves as a coordination point for substrate. D246 lines the Zn(2+) pocket. D246 is an active-site residue. Positions 250 and 262 each coordinate substrate.

Belongs to the metallo-dependent hydrolases superfamily. DHOase family. Class II DHOase subfamily. In terms of assembly, homodimer. The cofactor is Zn(2+).

The catalysed reaction is (S)-dihydroorotate + H2O = N-carbamoyl-L-aspartate + H(+). It functions in the pathway pyrimidine metabolism; UMP biosynthesis via de novo pathway; (S)-dihydroorotate from bicarbonate: step 3/3. Functionally, catalyzes the reversible cyclization of carbamoyl aspartate to dihydroorotate. The sequence is that of Dihydroorotase from Synechocystis sp. (strain ATCC 27184 / PCC 6803 / Kazusa).